The following is a 311-amino-acid chain: Nudix hydrolase 9 (311 aa).

In terms of domain architecture, Nudix hydrolase spans 131–298 (SSPLGNGAVI…GFALYELMLQ (168 aa)). The short motif at 192–213 (LNKKVTQEMFDSIICEVVEETG) is the Nudix box element. 2 residues coordinate Mg(2+): Glu207 and Glu211.

The protein belongs to the Nudix hydrolase family. It depends on Mg(2+) as a cofactor. The cofactor is Mn(2+). In terms of tissue distribution, expressed in roots, stems and leaves.

Probably mediates the hydrolysis of some nucleoside diphosphate derivatives. In Arabidopsis thaliana (Mouse-ear cress), this protein is Nudix hydrolase 9 (NUDT9).